We begin with the raw amino-acid sequence, 179 residues long: Inner membrane-spanning protein YciB (179 aa).

Transmembrane regions (helical) follow at residues 22-42 (IYAA…YSWV), 50-70 (MALI…FFHN), 76-96 (WKVT…QWVM), 121-141 (LAWA…AFWL), and 149-169 (FKVF…GIYI).

The protein belongs to the YciB family.

The protein resides in the cell inner membrane. Functionally, plays a role in cell envelope biogenesis, maintenance of cell envelope integrity and membrane homeostasis. The protein is Inner membrane-spanning protein YciB of Shigella boydii serotype 18 (strain CDC 3083-94 / BS512).